Reading from the N-terminus, the 401-residue chain is MGFITKAIPLALAAASVINGAEILETRAGVQTLADKYIVVMNDGMSDKDFDSHRSWVNRTHRRRLIRRGAKAMGGMKYTYNFPTGLKGYSGHFDEQMIKEISKRADVKYIERDARVQINAIEQQDNVPSWGLARVGSREPGGTTYYYDSTAGEGTTAYIIDTGTDIQHEEFDGGRATWGENFADDMDMDCNGHGTHVSGTVGGRTFGVAKKSNIVAVKVLDCNGSGSNSGVIMGMQWATEDAQSKGADKAVVNMSLGGAFSQTSNDAAKAIAEGGVFLAVAAGNDNVDAAEASPASEPSICTVAASTEQDGKADFSNFGQVVDVYAPGDGITSAKPGGGSQVLSGTSMASPHVAGLAAYLIGLGKGGGPQLCDTIKQMAIDVIQNPGSSTTSKLINNGSGM.

Positions 1–20 (MGFITKAIPLALAAASVING) are cleaved as a signal peptide. The propeptide occupies 21 to 119 (AEILETRAGV…IERDARVQIN (99 aa)). The Inhibitor I9 domain maps to 36–118 (KYIVVMNDGM…YIERDARVQI (83 aa)). The N-linked (GlcNAc...) asparagine glycan is linked to Asn-58. One can recognise a Peptidase S8 domain in the interval 129 to 401 (SWGLARVGSR…SKLINNGSGM (273 aa)). Residues Asp-161 and His-193 each act as charge relay system in the active site. Residues Asn-223 and Asn-253 are each glycosylated (N-linked (GlcNAc...) asparagine). Ser-347 functions as the Charge relay system in the catalytic mechanism. A glycan (N-linked (GlcNAc...) asparagine) is linked at Asn-397.

It belongs to the peptidase S8 family.

The protein resides in the secreted. Its function is as follows. Secreted subtilisin-like serine protease with keratinolytic activity that contributes to pathogenicity. This chain is Subtilisin-like protease 7 (SUB7), found in Trichophyton equinum (Horse ringworm fungus).